Reading from the N-terminus, the 514-residue chain is 2,3-bisphosphoglycerate-independent phosphoglycerate mutase (514 aa).

Mn(2+)-binding residues include Asp-14 and Ser-64. Ser-64 acts as the Phosphoserine intermediate in catalysis. Substrate is bound by residues His-125, 155 to 156 (RD), Arg-187, Arg-193, 263 to 266 (RADR), and Lys-336. 5 residues coordinate Mn(2+): Asp-403, His-407, Asp-444, His-445, and His-463.

This sequence belongs to the BPG-independent phosphoglycerate mutase family. Monomer. The cofactor is Mn(2+).

It carries out the reaction (2R)-2-phosphoglycerate = (2R)-3-phosphoglycerate. It functions in the pathway carbohydrate degradation; glycolysis; pyruvate from D-glyceraldehyde 3-phosphate: step 3/5. Its activity is regulated as follows. Insensitive to vanadate. Catalyzes the interconversion of 2-phosphoglycerate (2-PGA) and 3-phosphoglycerate (3-PGA). This chain is 2,3-bisphosphoglycerate-independent phosphoglycerate mutase, found in Escherichia coli (strain K12).